Here is a 105-residue protein sequence, read N- to C-terminus: N(4)-acetylcytidine amidohydrolase (105 aa).

The region spanning 7-93 is the ASCH domain; sequence TFFERFEHDI…VIAEIYPGLE (87 aa). K21 functions as the Proton acceptor in the catalytic mechanism. The Nucleophile role is filled by T24. E74 acts as the Proton donor in catalysis.

It belongs to the N(4)-acetylcytidine amidohydrolase family.

The catalysed reaction is N(4)-acetylcytidine + H2O = cytidine + acetate + H(+). The enzyme catalyses N(4)-acetyl-2'-deoxycytidine + H2O = 2'-deoxycytidine + acetate + H(+). It catalyses the reaction N(4)-acetylcytosine + H2O = cytosine + acetate + H(+). Functionally, catalyzes the hydrolysis of N(4)-acetylcytidine (ac4C). The sequence is that of N(4)-acetylcytidine amidohydrolase from Shewanella baltica (strain OS155 / ATCC BAA-1091).